Here is a 188-residue protein sequence, read N- to C-terminus: dCTP deaminase (188 aa).

Residues 111 to 116 (KSTYAR), 135 to 137 (TLE), Q156, Y170, K179, and Q180 each bind dCTP. E137 serves as the catalytic Proton donor/acceptor.

Belongs to the dCTP deaminase family. As to quaternary structure, homotrimer.

The catalysed reaction is dCTP + H2O + H(+) = dUTP + NH4(+). It participates in pyrimidine metabolism; dUMP biosynthesis; dUMP from dCTP (dUTP route): step 1/2. Functionally, catalyzes the deamination of dCTP to dUTP. This is dCTP deaminase from Orientia tsutsugamushi (strain Boryong) (Rickettsia tsutsugamushi).